The primary structure comprises 180 residues: O-acetyl-ADP-ribose deacetylase (180 aa).

Residues 1–175 form the Macro domain; it reads MKPQIDVIHG…LYQRLLTQRG (175 aa). Residues 11 to 12, asparagine 25, 33 to 35, and 122 to 126 each bind substrate; these read DI, GVD, and STGVY. The Proton acceptor role is filled by aspartate 35.

The protein belongs to the MacroD-type family. YmdB subfamily. Homodimer. Interacts with RNase III.

The enzyme catalyses 3''-O-acetyl-ADP-D-ribose + H2O = ADP-D-ribose + acetate + H(+). It catalyses the reaction 2''-O-acetyl-ADP-D-ribose + H2O = ADP-D-ribose + acetate + H(+). In terms of biological role, deacetylates O-acetyl-ADP ribose to yield ADP-ribose and free acetate. Down-regulates ribonuclease 3 (RNase III) activity. Acts by interacting directly with the region of the ribonuclease that is required for dimerization/activation. The sequence is that of O-acetyl-ADP-ribose deacetylase from Enterobacter cloacae subsp. cloacae (strain ATCC 13047 / DSM 30054 / NBRC 13535 / NCTC 10005 / WDCM 00083 / NCDC 279-56).